The chain runs to 200 residues: Lipopolysaccharide core heptose(II)-phosphate phosphatase (200 aa).

The N-terminal stretch at methionine 1–alanine 25 is a signal peptide.

Belongs to the phosphoglycerate mutase family. Ais subfamily.

It is found in the periplasm. The protein operates within bacterial outer membrane biogenesis; lipopolysaccharide metabolism. Catalyzes the dephosphorylation of heptose(II) of the outer membrane lipopolysaccharide core. The sequence is that of Lipopolysaccharide core heptose(II)-phosphate phosphatase from Escherichia coli O157:H7.